The following is a 204-amino-acid chain: DNA-binding transcriptional activator EvgA (204 aa).

One can recognise a Response regulatory domain in the interval 2–117; sequence NAIIIDDHPL…NIIAAIEAAK (116 aa). D52 is modified (4-aspartylphosphate). An HTH luxR-type domain is found at 137–202; sequence DQQKLDSLSK…DLYTFAQRNK (66 aa). Residues 161–180 constitute a DNA-binding region (H-T-H motif); sequence NNDIAEKMFISNKTVSTYKS.

As to quaternary structure, homodimer. Post-translationally, phosphorylated by EvgS.

The protein resides in the cytoplasm. Member of the two-component regulatory system EvgS/EvgA. Regulates the expression of emrKY operon and yfdX. Also seems to control expression of at least one other multidrug efflux operon. This is DNA-binding transcriptional activator EvgA (evgA) from Escherichia coli O157:H7.